The following is an 83-amino-acid chain: RNA-binding protein Hfq (83 aa).

In terms of domain architecture, Sm spans 9 to 68 (DPYLNALRKERIPVSIFLVNGIKLQGQIESFDQFVILLKNTVSQMVYKHAISTVVPARNV).

This sequence belongs to the Hfq family. In terms of assembly, homohexamer.

RNA chaperone that binds small regulatory RNA (sRNAs) and mRNAs to facilitate mRNA translational regulation in response to envelope stress, environmental stress and changes in metabolite concentrations. Also binds with high specificity to tRNAs. This chain is RNA-binding protein Hfq, found in Marinobacter nauticus (strain ATCC 700491 / DSM 11845 / VT8) (Marinobacter aquaeolei).